The following is a 248-amino-acid chain: Ribosomal RNA small subunit methyltransferase J (248 aa).

S-adenosyl-L-methionine-binding positions include 98–99 (RD), 114–115 (ER), 150–151 (SS), and Asp-168.

The protein belongs to the methyltransferase superfamily. RsmJ family.

Its subcellular location is the cytoplasm. It catalyses the reaction guanosine(1516) in 16S rRNA + S-adenosyl-L-methionine = N(2)-methylguanosine(1516) in 16S rRNA + S-adenosyl-L-homocysteine + H(+). Its function is as follows. Specifically methylates the guanosine in position 1516 of 16S rRNA. This is Ribosomal RNA small subunit methyltransferase J from Shewanella denitrificans (strain OS217 / ATCC BAA-1090 / DSM 15013).